The primary structure comprises 50 residues: Toxic protein HokC (50 aa).

Residues 1–5 (MKQHK) are Cytoplasmic-facing. The helical; Signal-anchor for type II membrane protein transmembrane segment at 6–24 (AMIVALIVICITAVVAALV) threads the bilayer. Residues 25–50 (TRKDLCEVHIRTGQTEVAVFTAYESE) are Periplasmic-facing.

This sequence belongs to the Hok/Gef family. As to quaternary structure, homodimer; disulfide-linked.

It is found in the cell inner membrane. Toxic component of a type I toxin-antitoxin (TA) system. When overexpressed kills cells within minutes; causes collapse of the transmembrane potential and arrest of respiration. Its toxic effect is probably neutralized by antisense antitoxin RNA SokC. The chain is Toxic protein HokC from Escherichia coli (strain K12).